The chain runs to 724 residues: Peroxidase mlt-7 (724 aa).

Positions 1 to 24 (MRRLHRNLSLLFLICILNEYRIES) are cleaved as a signal peptide. N7 carries N-linked (GlcNAc...) asparagine glycosylation. Positions 25–178 (QTLSPPITDR…GCVPQLSDVG (154 aa)) are excised as a propeptide. The ShKT domain occupies 42 to 76 (CCDHHEWCRFWASIGECNANKDWMTENCQLACGTC). Residues C181 and C198 are joined by a disulfide bond. N233 carries an N-linked (GlcNAc...) asparagine glycan. Residue H271 is the Proton acceptor of the active site. Ca(2+) is bound at residue D272. A disulfide bond links C284 and C294. Residues T335, Y337, D339, and S341 each contribute to the Ca(2+) site. H493 serves as a coordination point for heme b. N-linked (GlcNAc...) asparagine glycosylation is found at N509 and N617. Disulfide bonds link C588-C645 and C686-C710.

The protein belongs to the peroxidase family. Heme b serves as cofactor. In terms of tissue distribution, expressed in the hypodermal cells, specifically the head and seam/body.

The enzyme catalyses 2 a phenolic donor + H2O2 = 2 a phenolic radical donor + 2 H2O. Its function is as follows. Plays an essential role in cuticle biogenesis. Required in combination with bli-3 for correct formation of cross-links in cuticle collagens. The chain is Peroxidase mlt-7 from Caenorhabditis elegans.